The primary structure comprises 382 residues: Anhydro-N-acetylmuramic acid kinase (382 aa).

ATP is bound at residue 18–25 (GTSLDGVD).

Belongs to the anhydro-N-acetylmuramic acid kinase family.

The enzyme catalyses 1,6-anhydro-N-acetyl-beta-muramate + ATP + H2O = N-acetyl-D-muramate 6-phosphate + ADP + H(+). The protein operates within amino-sugar metabolism; 1,6-anhydro-N-acetylmuramate degradation. It functions in the pathway cell wall biogenesis; peptidoglycan recycling. Functionally, catalyzes the specific phosphorylation of 1,6-anhydro-N-acetylmuramic acid (anhMurNAc) with the simultaneous cleavage of the 1,6-anhydro ring, generating MurNAc-6-P. Is required for the utilization of anhMurNAc either imported from the medium or derived from its own cell wall murein, and thus plays a role in cell wall recycling. This chain is Anhydro-N-acetylmuramic acid kinase, found in Ralstonia nicotianae (strain ATCC BAA-1114 / GMI1000) (Ralstonia solanacearum).